The primary structure comprises 891 residues: Shieldin complex subunit 2 (891 aa).

Positions 1–61 (MSQGSQVHIF…AGDQEFKNLE (61 aa)) are sufficient for interaction with SHLD3 and MAD2L2. Residues 1–542 (MSQGSQVHIF…TYVSTKHSYL (542 aa)) are interaction with ASTE1. 3 disordered regions span residues 184–222 (MSTGTKPEPTGHRERQSQESFSDTRCEPQSEGAVRKASD), 260–294 (NMEAEPTGSQGVRRTEGDFSKPGGDFEEESENEQS), and 333–357 (NEENLPPNELCSSHPSTANRSWSCK). A compositionally biased stretch (basic and acidic residues) spans 192–222 (PTGHRERQSQESFSDTRCEPQSEGAVRKASD). Polar residues-rich tracts occupy residues 260-271 (NMEAEPTGSQGV) and 342-354 (LCSSHPSTANRSW). Positions 695–866 (KYSGVVLIKA…QQDFSLLDFC (172 aa)) are mediates interaction with SHLD1.

The protein belongs to the SHLD2 family. Component of the shieldin complex, consisting of SHLD1, SHLD2, SHLD3 and MAD2L2/REV7. Within the complex, SHLD2 forms a scaffold which interacts with a SHLD3-MAD2L2 subcomplex via its N-terminus, and with SHLD1 via its C-terminus. Interacts with TP53BP1. Interacts with RIF1. Interacts with ASTE1.

The protein localises to the chromosome. In terms of biological role, component of the shieldin complex, which plays an important role in repair of DNA double-stranded breaks (DSBs). During G1 and S phase of the cell cycle, the complex functions downstream of TP53BP1 to promote non-homologous end joining (NHEJ) and suppress DNA end resection. Mediates various NHEJ-dependent processes including immunoglobulin class-switch recombination, and fusion of unprotected telomeres. This Mus musculus (Mouse) protein is Shieldin complex subunit 2.